The chain runs to 331 residues: Threonine-phosphate decarboxylase (331 aa).

Position 192 is an N6-(pyridoxal phosphate)lysine (Lys-192).

This sequence belongs to the class-I pyridoxal-phosphate-dependent aminotransferase family. Homodimer. Pyridoxal 5'-phosphate serves as cofactor.

The protein resides in the cytoplasm. It carries out the reaction O-phospho-L-threonine + H(+) = (R)-1-aminopropan-2-yl phosphate + CO2. Its pathway is cofactor biosynthesis; adenosylcobalamin biosynthesis. Decarboxylates L-threonine-O-3-phosphate to yield (R)-1-amino-2-propanol O-2-phosphate, the precursor for the linkage between the nucleotide loop and the corrin ring in cobalamin. This is Threonine-phosphate decarboxylase (cobC) from Pseudomonas aeruginosa (strain ATCC 15692 / DSM 22644 / CIP 104116 / JCM 14847 / LMG 12228 / 1C / PRS 101 / PAO1).